We begin with the raw amino-acid sequence, 168 residues long: tRNA-splicing endonuclease subunit Sen15 (168 aa).

The disordered stretch occupies residues 1 to 32 (MEERSDSEPTPGCSGPGPAPVRDGGGAHTWAP). S7 and S165 each carry phosphoserine.

Belongs to the SEN15 family. In terms of assembly, homodimer. tRNA splicing endonuclease is a heterotetramer composed of TSEN2, TSEN15, TSEN34/LENG5 and TSEN54. tRNA splicing endonuclease complex also contains proteins of the pre-mRNA 3' end processing machinery such as CLP1, CPSF1, CPSF4 and CSTF2.

The protein localises to the nucleus. It localises to the nucleolus. Functionally, non-catalytic subunit of the tRNA-splicing endonuclease complex, a complex responsible for identification and cleavage of the splice sites in pre-tRNA. It cleaves pre-tRNA at the 5' and 3' splice sites to release the intron. The products are an intron and two tRNA half-molecules bearing 2',3' cyclic phosphate and 5'-OH termini. There are no conserved sequences at the splice sites, but the intron is invariably located at the same site in the gene, placing the splice sites an invariant distance from the constant structural features of the tRNA body. The tRNA splicing endonuclease is also involved in mRNA processing via its association with pre-mRNA 3'-end processing factors, establishing a link between pre-tRNA splicing and pre-mRNA 3'-end formation, suggesting that the endonuclease subunits function in multiple RNA-processing events. The chain is tRNA-splicing endonuclease subunit Sen15 (Tsen15) from Mus musculus (Mouse).